The primary structure comprises 173 residues: Archaemetzincin (173 aa).

Residue His130 coordinates Zn(2+). Glu131 acts as the Proton acceptor in catalysis. Zn(2+) contacts are provided by His134, His140, Cys141, Cys146, Cys165, and Cys168.

The protein belongs to the peptidase M54 family. As to quaternary structure, monomer. Requires Zn(2+) as cofactor.

Probable zinc metalloprotease whose natural substrate is unknown. The chain is Archaemetzincin from Halobacterium salinarum (strain ATCC 29341 / DSM 671 / R1).